A 352-amino-acid chain; its full sequence is Dead end protein homolog 1 (352 aa).

2 RRM domains span residues serine 58–glutamate 136 and cysteine 138–proline 218. Residue arginine 336 is modified to Omega-N-methylarginine.

Interacts with APOBEC3. In terms of tissue distribution, isoform 1 and isoform 2 are expressed in testis. Isoform 1 is expressed continuously in post natal (PN) testis although levels are low between PN1 to PN6. Isoform 2 is expressed from PN 20 onwards. Isoform 2 is strongly expressed in meiotic and in post-meiotic germ cells of the testis with highest expression at the elongated spermatid stage (at protein level). Expressed in testis and heart. Expressed in germ cells and genital ridges. Not detected in testicular tumors.

It localises to the nucleus. The protein localises to the cytoplasm. Functionally, RNA-binding factor that positively regulates gene expression by prohibiting miRNA-mediated gene suppression. Relieves miRNA repression in germline cells. Prohibits the function of several miRNAs by blocking the accessibility of target mRNAs. Sequence-specific RNA-binding factor that binds specifically to U-rich regions (URRs) in the 3' untranslated region (3'-UTR) of several mRNAs. Does not bind to miRNAs. Isoform 1 may play a role during primordial germ cell (PGC) survival. However, does not seem to be essential for PGC migration. The protein is Dead end protein homolog 1 (Dnd1) of Mus musculus (Mouse).